The following is a 221-amino-acid chain: Phosphate-specific transport system accessory protein PhoU homolog 1 (221 aa).

Belongs to the PhoU family. In terms of assembly, homodimer.

It is found in the cytoplasm. In terms of biological role, plays a role in the regulation of phosphate uptake. In this role, it may bind, possibly as a chaperone, to PhoR, PhoP or a PhoR-PhoP complex to promote dephosphorylation of phospho-PhoP, or inhibit formation of the PhoR-PhoP transitory complex. The polypeptide is Phosphate-specific transport system accessory protein PhoU homolog 1 (phoU1) (Mycobacterium bovis (strain ATCC BAA-935 / AF2122/97)).